Here is a 2380-residue protein sequence, read N- to C-terminus: Probable polyketide synthase 25 (2380 aa).

Polar residues predominate over residues Met1 to Lys18. The tract at residues Met1–Asn29 is disordered. The Ketosynthase family 3 (KS3) domain maps to Asp31–Gln457. Residues Cys198, His340, and His380 each act as for beta-ketoacyl synthase activity in the active site. Residues Gly649–Tyr682 form an acyl/malonyl transferase region. Ser659 acts as the For acyl/malonyl transferase activity in catalysis. Positions Ile948 to Lys1070 are N-terminal hotdog fold. Positions Ile948 to Pro1234 constitute a PKS/mFAS DH domain. His982 acts as the Proton acceptor; for dehydratase activity in catalysis. The interval Asn1085–Pro1234 is C-terminal hotdog fold. Asp1148 serves as the catalytic Proton donor; for dehydratase activity. One can recognise a Carrier domain in the interval Lys2299–Phe2376. Ser2336 is subject to O-(pantetheine 4'-phosphoryl)serine.

Pantetheine 4'-phosphate is required as a cofactor.

Probable polyketide synthase. The polypeptide is Probable polyketide synthase 25 (pks25) (Dictyostelium discoideum (Social amoeba)).